A 521-amino-acid chain; its full sequence is Protein disulfide-isomerase A5 (521 aa).

A signal peptide spans M1–S25. 3 consecutive Thioredoxin domains span residues F136–P263, A274–S386, and P387–E508. 3 disulfide bridges follow: C184–C187, C307–C310, and C428–C431. The short motif at K518–L521 is the Prevents secretion from ER element.

The protein belongs to the protein disulfide isomerase family.

The protein resides in the endoplasmic reticulum lumen. It carries out the reaction Catalyzes the rearrangement of -S-S- bonds in proteins.. This Bos taurus (Bovine) protein is Protein disulfide-isomerase A5 (PDIA5).